The chain runs to 107 residues: CRISPR-associated endoribonuclease Cas2 (107 aa).

Mg(2+) is bound at residue Asp-6.

It belongs to the CRISPR-associated endoribonuclease Cas2 protein family. As to quaternary structure, homodimer, forms a heterotetramer with a Cas1 homodimer. Requires Mg(2+) as cofactor.

Functionally, CRISPR (clustered regularly interspaced short palindromic repeat), is an adaptive immune system that provides protection against mobile genetic elements (viruses, transposable elements and conjugative plasmids). CRISPR clusters contain sequences complementary to antecedent mobile elements and target invading nucleic acids. CRISPR clusters are transcribed and processed into CRISPR RNA (crRNA). Functions as a ssRNA-specific endoribonuclease. Involved in the integration of spacer DNA into the CRISPR cassette. The sequence is that of CRISPR-associated endoribonuclease Cas2 from Streptococcus mutans serotype c (strain NN2025).